The chain runs to 428 residues: Tyrosine--tRNA ligase (428 aa).

Y37 is an L-tyrosine binding site. The short motif at 42-51 (PTGSSLHAGH) is the 'HIGH' region element. Positions 175 and 179 each coordinate L-tyrosine. The 'KMSKS' region motif lies at 235-239 (KFGKS). K238 contributes to the ATP binding site. The S4 RNA-binding domain occupies 358-415 (ATILDLLVESGLEKSKGAARRTVGEGGAYVNNQRIEDIEWSPSAEELLHGSWLVLRKG).

It belongs to the class-I aminoacyl-tRNA synthetase family. TyrS type 1 subfamily. In terms of assembly, homodimer.

The protein localises to the cytoplasm. It carries out the reaction tRNA(Tyr) + L-tyrosine + ATP = L-tyrosyl-tRNA(Tyr) + AMP + diphosphate + H(+). Functionally, catalyzes the attachment of tyrosine to tRNA(Tyr) in a two-step reaction: tyrosine is first activated by ATP to form Tyr-AMP and then transferred to the acceptor end of tRNA(Tyr). The sequence is that of Tyrosine--tRNA ligase from Corynebacterium jeikeium (strain K411).